Here is a 346-residue protein sequence, read N- to C-terminus: Methylthioribose-1-phosphate isomerase (346 aa).

Residues 54-56 (RGA), Arg91, and Gln192 each bind substrate. Asp233 acts as the Proton donor in catalysis. Position 243 to 244 (243 to 244 (NK)) interacts with substrate.

It belongs to the eIF-2B alpha/beta/delta subunits family. MtnA subfamily.

It carries out the reaction 5-(methylsulfanyl)-alpha-D-ribose 1-phosphate = 5-(methylsulfanyl)-D-ribulose 1-phosphate. It functions in the pathway amino-acid biosynthesis; L-methionine biosynthesis via salvage pathway; L-methionine from S-methyl-5-thio-alpha-D-ribose 1-phosphate: step 1/6. Functionally, catalyzes the interconversion of methylthioribose-1-phosphate (MTR-1-P) into methylthioribulose-1-phosphate (MTRu-1-P). This is Methylthioribose-1-phosphate isomerase from Yersinia pseudotuberculosis serotype O:1b (strain IP 31758).